Here is a 353-residue protein sequence, read N- to C-terminus: Outer membrane protein P2 (353 aa).

The N-terminal stretch at 1-20 is a signal peptide; that stretch reads MKKTLAALIVGAFAASAANA.

Belongs to the Gram-negative porin family. As to quaternary structure, homotrimer.

It is found in the cell outer membrane. Forms pores that allow passive diffusion of small molecules across the outer membrane. The chain is Outer membrane protein P2 (ompP2) from Haemophilus influenzae.